A 281-amino-acid polypeptide reads, in one-letter code: Nucleotide-binding protein DNO_0399 (281 aa).

Residue 6 to 13 (GMSGAGKS) coordinates ATP. 55–58 (DARN) lines the GTP pocket.

Belongs to the RapZ-like family.

In terms of biological role, displays ATPase and GTPase activities. The protein is Nucleotide-binding protein DNO_0399 of Dichelobacter nodosus (strain VCS1703A).